The chain runs to 245 residues: MRYKITIEYNGSNFIGWQRQKHLSNSIQEILEEAIFKFSRESVTTYVAGRTDAGVHALGQVAHFDLTADFDAYVVRNAINYHLIPHSISVLNVEKTDDEFHARFSAKKRHYLYKIINRYSPLTIDYNRAWLVRNPLDVEKMMRAVEYIKGNHDFSSFRARHCQSKSPVKTMDDLKIIHSDQCIDIYFSAISFLHNQVRIIVGTLVECGKNSFPPEYTKDILEAKDRSYAGMTAPPYGLYFVKVDY.

Asp52 acts as the Nucleophile in catalysis. Substrate is bound at residue Tyr111.

The protein belongs to the tRNA pseudouridine synthase TruA family. As to quaternary structure, homodimer.

The catalysed reaction is uridine(38/39/40) in tRNA = pseudouridine(38/39/40) in tRNA. In terms of biological role, formation of pseudouridine at positions 38, 39 and 40 in the anticodon stem and loop of transfer RNAs. In Ehrlichia canis (strain Jake), this protein is tRNA pseudouridine synthase A.